An 87-amino-acid polypeptide reads, in one-letter code: Translation initiation factor IF-1 2 (87 aa).

The region spanning 1–72 (MAKEELIELN…TKGRINFRHK (72 aa)) is the S1-like domain. A disordered region spans residues 66-87 (RINFRHKDERSGPPSRPPQHRR).

The protein belongs to the IF-1 family. Component of the 30S ribosomal translation pre-initiation complex which assembles on the 30S ribosome in the order IF-2 and IF-3, IF-1 and N-formylmethionyl-tRNA(fMet); mRNA recruitment can occur at any time during PIC assembly.

The protein resides in the cytoplasm. In terms of biological role, one of the essential components for the initiation of protein synthesis. Stabilizes the binding of IF-2 and IF-3 on the 30S subunit to which N-formylmethionyl-tRNA(fMet) subsequently binds. Helps modulate mRNA selection, yielding the 30S pre-initiation complex (PIC). Upon addition of the 50S ribosomal subunit IF-1, IF-2 and IF-3 are released leaving the mature 70S translation initiation complex. In Bordetella parapertussis (strain 12822 / ATCC BAA-587 / NCTC 13253), this protein is Translation initiation factor IF-1 2.